Reading from the N-terminus, the 538-residue chain is Calcyphosin-2 (538 aa).

Polar residues predominate over residues 134-146 (RNAENTKSNVTHK). A disordered region spans residues 134–154 (RNAENTKSNVTHKQSPRNKID). EF-hand domains follow at residues 426-461 (RILTGLGKYFQQLDKEGNGLLDKADFKQALKVFHLE), 462-497 (VSEKDFESAWLILNDNGNGKVDYGEFKRGIIGEMNE), and 498-533 (YRKSYVRKAFMKLDFNKSGSVPIINIRKCYCAKKHS). Positions 439, 443, 450, 477, 479, 481, 486, 511, 513, 515, 517, and 522 each coordinate Ca(2+).

As to expression, abundantly expressed in many tissues. Expressed in brain, colon, heart, kidney, liver, lung, liver, pancreas, placenta, skeletal muscle, testis and thymus. Highest expression in colon, testis, lung, placenta and brain.

The protein is Calcyphosin-2 of Homo sapiens (Human).